An 826-amino-acid chain; its full sequence is Dolichyl-diphosphooligosaccharide--protein glycosyltransferase subunit STT3B (826 aa).

The tract at residues 1 to 60 (MAEPSAPESKHKSSLNSSPWSGLMALGNSRHGHHGPGAQCAHKAAGGAAPPKPAPAGLSG) is disordered. A2 is subject to N-acetylalanine. Residues 2–41 (AEPSAPESKHKSSLNSSPWSGLMALGNSRHGHHGPGAQCA) lie on the Cytoplasmic side of the membrane. Residues S13, S18, and S29 each carry the phosphoserine modification. The span at 37 to 49 (GAQCAHKAAGGAA) shows a compositional bias: low complexity. The helical transmembrane segment at 42–86 (HKAAGGAAPPKPAPAGLSGGLSQPAGWQSLLSFTILFLAWLAGFS) threads the bilayer. Residues 87 to 173 (SRLFAVIRFE…VHIRDVCVFL (87 aa)) are Lumenal-facing. Residues 101 to 103 (EFD) carry the DXD motif 1 motif. Residue D103 participates in Mn(2+) binding. A helical transmembrane segment spans residues 174 to 192 (APTFSGLTSISTFLLTREL). The Cytoplasmic portion of the chain corresponds to 193–194 (WN). A helical membrane pass occupies residues 195-212 (QGAGLLAACFIAIVPGYI). The Lumenal segment spans residues 213–223 (SRSVAGSFDNE). Residues D221 and E223 each contribute to the Mn(2+) site. The short motif at 221–223 (DNE) is the DXD motif 2 element. A helical membrane pass occupies residues 224-243 (GIAIFALQFTYYLWVKSVKT). Over 244–245 (GS) the chain is Cytoplasmic. Residues 246-260 (VFWTMCCCLSYFYMV) form a helical membrane-spanning segment. Residues 261–265 (SAWGG) are Lumenal-facing. A helical transmembrane segment spans residues 266-282 (YVFIINLIPLHVFVLLL). The Cytoplasmic segment spans residues 283-287 (MQRYS). The chain crosses the membrane as a helical span at residues 288 to 313 (KRVYIAYSTFYIVGLILSMQIPFVGF). Topologically, residues 314-321 (QPIRTSEH) are lumenal. Residues 322 to 341 (MAAAGVFALLQAYAFLQYLR) form a helical membrane-spanning segment. Residues 342–350 (DRLTKQEFQ) lie on the Cytoplasmic side of the membrane. The helical transmembrane segment at 351–371 (TLFFLGVSLAAGAVFLSVIYL) threads the bilayer. Residues 372–410 (TYTGYIAPWSGRFYSLWDTGYAKIHIPIIASVSEHQPTT) are Lumenal-facing. Positions 402–405 (SVSE) match the SVSE motif motif. The chain crosses the membrane as a helical span at residues 411–433 (WVSFFFDLHILVCTFPAGLWFCI). The Cytoplasmic segment spans residues 434-439 (KNINDE). A helical transmembrane segment spans residues 440–456 (RVFVALYAISAVYFAGV). The Lumenal segment spans residues 457 to 460 (MVRL). Residue R459 participates in dolichyl diphosphooligosaccharide binding. Residues 461–482 (MLTLTPVVCMLSAIAFSNVFEH) traverse the membrane as a helical segment. At 483–526 (YLGDDMKRENPPVEDSSDEDDKRNQGNLYDKAGKVRKHATEQEK) the chain is on the cytoplasmic side. The tract at residues 490 to 509 (RENPPVEDSSDEDDKRNQGN) is disordered. Phosphoserine is present on residues S498 and S499. The chain crosses the membrane as a helical span at residues 527–552 (TEEGLGPNIKSIVTMLMLMLLMMFAV). Residues 553-826 (HCTWVTSNAY…KGKKISKKTV (274 aa)) are Lumenal-facing. The segment at 604–606 (WWD) is interacts with target acceptor peptide in protein substrate. The WWDYG motif motif lies at 604–608 (WWDYG). Y609 is a dolichyl diphosphooligosaccharide binding site. N-linked (GlcNAc...) asparagine glycans are attached at residues N616 and N623. N627 carries an N-linked (GlcNAc...) (high mannose) asparagine glycan. An N-linked (GlcNAc...) asparagine glycan is attached at N641. The DK motif motif lies at 671-678 (DINKFLWM).

It belongs to the STT3 family. In terms of assembly, component of the oligosaccharyltransferase (OST) complex. There are 2 OST complexes, OST-A and OST-B, which contain STT3A or STT3B as catalytic subunit, respectively. OST-A and OST-B contain common core subunits RPN1, RPN2, OST48, OST4, DAD1 and TMEM258, and OST-B contains either MAGT1 or TUSC3 as specific accessory subunit. The cofactor is Mg(2+). Requires Mn(2+) as cofactor. As to expression, expressed in heart, brain, placenta, lung, liver, muscle, kidney and pancreas. Expressed in skin fibroblasts (at protein level).

It is found in the endoplasmic reticulum. The protein localises to the endoplasmic reticulum membrane. The catalysed reaction is a di-trans,poly-cis-dolichyl diphosphooligosaccharide + L-asparaginyl-[protein] = N(4)-(oligosaccharide-(1-&gt;4)-N-acetyl-beta-D-glucosaminyl-(1-&gt;4)-N-acetyl-beta-D-glucosaminyl)-L-asparaginyl-[protein] + a di-trans,poly-cis-dolichyl diphosphate + H(+). It participates in protein modification; protein glycosylation. In terms of biological role, catalytic subunit of the oligosaccharyl transferase (OST) complex that catalyzes the initial transfer of a defined glycan (Glc(3)Man(9)GlcNAc(2) in eukaryotes) from the lipid carrier dolichol-pyrophosphate to an asparagine residue within an Asn-X-Ser/Thr consensus motif in nascent polypeptide chains, the first step in protein N-glycosylation. N-glycosylation occurs cotranslationally and the complex associates with the Sec61 complex at the channel-forming translocon complex that mediates protein translocation across the endoplasmic reticulum (ER). All subunits are required for a maximal enzyme activity. This subunit contains the active site and the acceptor peptide and donor lipid-linked oligosaccharide (LLO) binding pockets. STT3B is present in a small subset of OST complexes (OST-B) and mediates both cotranslational and post-translational N-glycosylation of target proteins: STT3B-containing complexes are required for efficient post-translational glycosylation and while they are less competent than STT3A-containing complexes for cotranslational glycosylation, they have the ability to mediate glycosylation of some nascent sites that are not accessible for STT3A. STT3B-containing complexes also act post-translationally and mediate modification of skipped glycosylation sites in unfolded proteins. Plays a role in ER-associated degradation (ERAD) pathway that mediates ubiquitin-dependent degradation of misfolded endoplasmic reticulum proteins by mediating N-glycosylation of unfolded proteins, which are then recognized by the ERAD pathway and targeted for degradation. Mediates glycosylation of the disease variant AMYL-TTR 'Asp-38' of TTR at 'Asn-118', leading to its degradation. This chain is Dolichyl-diphosphooligosaccharide--protein glycosyltransferase subunit STT3B, found in Homo sapiens (Human).